The chain runs to 187 residues: Large ribosomal subunit protein bL32m (187 aa).

Residues cysteine 109, cysteine 112, cysteine 122, and cysteine 125 each coordinate Zn(2+).

Belongs to the bacterial ribosomal protein bL32 family. Component of the mitochondrial ribosome large subunit (39S) which comprises a 16S rRNA and about 50 distinct proteins. In terms of processing, MRPL32 precursor is processed by the m-AAA protease (composed of AFG3L2 and SPG7), which cleaves the N-terminal transit peptide. Cleavage by the m-AAA protease takes place prior to assembly into the large subunit, an essential step for mitochondrial ribosome (mitoribosome) assembly. Proper processing by the m-AAA protease is dependent on the zinc-binding region within the tightly folded C-terminal domain of MRPL32: zinc-dependent folding halts degradation initiated from the N-terminus and triggers the release of mature MRPL32.

It is found in the mitochondrion. Its function is as follows. Component of the mitochondrial large ribosomal subunit (mt-LSU). The mitochondrial ribosome (mitoribosome) is a large ribonucleoprotein complex responsible for the synthesis of proteins inside mitochondria. The sequence is that of Large ribosomal subunit protein bL32m (Mrpl32) from Mus musculus (Mouse).